The following is a 103-amino-acid chain: ATP synthase subunit f, mitochondrial (103 aa).

The N-terminal 6 residues, 1–6 (MIFRRQ), are a transit peptide targeting the mitochondrion.

As to quaternary structure, F-type ATP synthases have 2 components, the catalytic core F(1) and the membrane-embedded component F(0), linked together by a central stalk and a peripheral stalk. The central stalk, also called rotor shaft, is often seen as part of F(1). The peripheral stalk is seen as part of F(0). F(0) contains the membrane channel next to the rotor. F-type ATP synthases form dimers but each monomer functions independently in ATP generation. The dimer consists of 17 different polypeptides: ATP1 (subunit alpha, 3 molecules per monomer, part of F(1)), ATP2 (subunit beta, 3 copies per monomer, part of F(1)), ATP3 (subunit gamma, part of the central stalk), ATP4 (subunit b, part of the peripheral stalk), ATP5/OSCP (subunit 5/OSCP, part of the peripheral stalk), ATP6 (subunit a, part of the peripheral stalk), ATP7 (subunit d, part of the peripheral stalk), ATP8 (subunit 8, part of the peripheral stalk), OLI1 (subunit c, part of the rotor, 10 molecules per monomer), ATP14 (subunit h, part of the peripheral stalk), ATP15 (subunit epsilon, part of the central stalk), ATP16 (subunit delta, part of the central stalk), ATP17 (subunit f, part of the peripheral stalk), ATP18 (subunit i/j, part of the peripheral stalk), ATP19 (subunit k, dimer-specific, at interface between monomers), ATP20 (subunit g, at interface between monomers), TIM11 (subunit e, at interface between monomers).

It localises to the mitochondrion inner membrane. Functionally, mitochondrial membrane ATP synthase (F(1)F(0) ATP synthase or Complex V) produces ATP from ADP in the presence of a proton gradient across the membrane which is generated by electron transport complexes of the respiratory chain. F-type ATP synthases consist of two structural domains, F(1) - containing the extramembraneous catalytic core, and F(0) - containing the membrane proton channel, linked together by a central stalk and a peripheral stalk. During catalysis, ATP synthesis in the catalytic domain of F(1) is coupled via a rotary mechanism of the central stalk subunits to proton translocation. Part of the complex F(0) domain. Minor subunit located with subunit a/ATP6 in the membrane. The protein is ATP synthase subunit f, mitochondrial of Yarrowia lipolytica (strain CLIB 122 / E 150) (Yeast).